Reading from the N-terminus, the 505-residue chain is Actin nucleation-promoting factor WASL (505 aa).

Residue serine 2 is modified to N-acetylserine. In terms of domain architecture, WH1 spans 34–141; that stretch reads LGKKCVTMSS…KAVTDLLGRR (108 aa). 2 disordered regions span residues 138 to 163 and 185 to 205; these read LGRRQRKSEKRRDPPNGPNLPMATVD and TKEKKKGKAKKKRLTKADIGT. Over residues 186–198 the composition is skewed to basic residues; the sequence is KEKKKGKAKKKRL. A CRIB domain is found at 203-216; that stretch reads IGTPSNFQHIGHVG. Serine 242 is modified (phosphoserine; by TNK2). Residue tyrosine 256 is modified to Phosphotyrosine; by FAK1 and TNK2. Disordered stretches follow at residues 266-406, 449-468, and 477-505; these read EAVK…AGSK, SVTDAPESTPPAPAPTSGIV, and KRSKAIHSSDEDEDEDDDEDFEDDDEWED. Composition is skewed to pro residues over residues 276–349, 356–365, and 372–391; these read APPP…PLPA, SGPPPPPPPL, and APPPPPPPPPPPGPPPPPGL. At arginine 307 the chain carries Omega-N-methylarginine. WH2 domains follow at residues 405–422 and 433–450; these read SKAALLDQIREGAQLKKV and GRDALLDQIRQGIQLKSV. Phosphoserine is present on residues serine 484 and serine 485. Acidic residues predominate over residues 486–505; the sequence is DEDEDEDDDEDFEDDDEWED.

As to quaternary structure, binds actin and the Arp2/3 complex. Interacts with CDC42. Interacts with FCHSD1. Interacts with FCHSD2. Binds to SH3 domains of GRB2. Interacts with the C-terminal SH3 domain of DNMBP. Interacts with SNX9. Interacts with the WW domains of PRPF40A/FBP11. Interacts with PTK2/FAK1. Interacts with PACSIN1, PACSIN2 and PACSIN3. Interacts with NOSTRIN. Binds to TNK2. Interacts with SNX33. Interacts with NONO (via second RRM domain); the interaction is direct. Component of a multiprotein complex with NONO and SFPQ; associates with the complex via direct interaction with NONO. In terms of processing, phosphorylation at Ser-242, Tyr-256, Ser-484 and Ser-485 enhances actin polymerization activity.

It is found in the cytoplasm. It localises to the cytoskeleton. Its subcellular location is the nucleus. Its function is as follows. Regulates actin polymerization by stimulating the actin-nucleating activity of the Arp2/3 complex. Involved in various processes, such as mitosis and cytokinesis, via its role in the regulation of actin polymerization. Together with CDC42, involved in the extension and maintenance of the formation of thin, actin-rich surface projections called filopodia. In addition to its role in the cytoplasm, also plays a role in the nucleus by regulating gene transcription, probably by promoting nuclear actin polymerization. Binds to HSF1/HSTF1 and forms a complex on heat shock promoter elements (HSE) that negatively regulates HSP90 expression. Plays a role in dendrite spine morphogenesis. The polypeptide is Actin nucleation-promoting factor WASL (WASL) (Bos taurus (Bovine)).